The sequence spans 154 residues: Cytochrome c oxidase subunit 5A, mitochondrial (154 aa).

Residues M1–Y45 constitute a mitochondrion transit peptide. Residues L2–G21 carry the SIFI-degron motif. An N6-acetyllysine mark is found at K91 and K117. T145 is subject to Phosphothreonine.

The protein belongs to the cytochrome c oxidase subunit 5A family. As to quaternary structure, component of the cytochrome c oxidase (complex IV, CIV), a multisubunit enzyme composed of 14 subunits. The complex is composed of a catalytic core of 3 subunits MT-CO1, MT-CO2 and MT-CO3, encoded in the mitochondrial DNA, and 11 supernumerary subunits COX4I, COX5A, COX5B, COX6A, COX6B, COX6C, COX7A, COX7B, COX7C, COX8 and NDUFA4, which are encoded in the nuclear genome. The complex exists as a monomer or a dimer and forms supercomplexes (SCs) in the inner mitochondrial membrane with NADH-ubiquinone oxidoreductase (complex I, CI) and ubiquinol-cytochrome c oxidoreductase (cytochrome b-c1 complex, complex III, CIII), resulting in different assemblies (supercomplex SCI(1)III(2)IV(1) and megacomplex MCI(2)III(2)IV(2)). Interacts with AFG1L. Interacts with RAB5IF. In terms of processing, in response to mitochondrial stress, the precursor protein is ubiquitinated by the SIFI complex in the cytoplasm before mitochondrial import, leading to its degradation. Within the SIFI complex, UBR4 initiates ubiquitin chain that are further elongated or branched by KCMF1.

It localises to the mitochondrion inner membrane. Its pathway is energy metabolism; oxidative phosphorylation. Component of the cytochrome c oxidase, the last enzyme in the mitochondrial electron transport chain which drives oxidative phosphorylation. The respiratory chain contains 3 multisubunit complexes succinate dehydrogenase (complex II, CII), ubiquinol-cytochrome c oxidoreductase (cytochrome b-c1 complex, complex III, CIII) and cytochrome c oxidase (complex IV, CIV), that cooperate to transfer electrons derived from NADH and succinate to molecular oxygen, creating an electrochemical gradient over the inner membrane that drives transmembrane transport and the ATP synthase. Cytochrome c oxidase is the component of the respiratory chain that catalyzes the reduction of oxygen to water. Electrons originating from reduced cytochrome c in the intermembrane space (IMS) are transferred via the dinuclear copper A center (CU(A)) of subunit 2 and heme A of subunit 1 to the active site in subunit 1, a binuclear center (BNC) formed by heme A3 and copper B (CU(B)). The BNC reduces molecular oxygen to 2 water molecules using 4 electrons from cytochrome c in the IMS and 4 protons from the mitochondrial matrix. This chain is Cytochrome c oxidase subunit 5A, mitochondrial (COX5A), found in Notamacropus parma (Parma wallaby).